The following is an 88-amino-acid chain: Phosphocarrier protein HPr (88 aa).

The 88-residue stretch at Met-1–Ile-88 folds into the HPr domain. His-15 serves as the catalytic Pros-phosphohistidine intermediate. Ser-47 is subject to Phosphoserine; by HPrK/P.

It belongs to the HPr family.

It is found in the cytoplasm. Its activity is regulated as follows. Phosphorylation on Ser-47 inhibits the phosphoryl transfer from enzyme I to HPr. In terms of biological role, general (non sugar-specific) component of the phosphoenolpyruvate-dependent sugar phosphotransferase system (sugar PTS). This major carbohydrate active-transport system catalyzes the phosphorylation of incoming sugar substrates concomitantly with their translocation across the cell membrane. The phosphoryl group from phosphoenolpyruvate (PEP) is transferred to the phosphoryl carrier protein HPr by enzyme I. Phospho-HPr then transfers it to the PTS EIIA domain. P-Ser-HPr interacts with the catabolite control protein A (CcpA), forming a complex that binds to DNA at the catabolite response elements cre, operator sites preceding a large number of catabolite-regulated genes. Thus, P-Ser-HPr is a corepressor in carbon catabolite repression (CCR), a mechanism that allows bacteria to coordinate and optimize the utilization of available carbon sources. P-Ser-HPr also plays a role in inducer exclusion, in which it probably interacts with several non-PTS permeases and inhibits their transport activity. The chain is Phosphocarrier protein HPr (ptsH) from Mycoplasma genitalium (strain ATCC 33530 / DSM 19775 / NCTC 10195 / G37) (Mycoplasmoides genitalium).